Consider the following 278-residue polypeptide: Probable esterase TOX9 (278 aa).

Active-site charge relay system residues include Ser119, Asp222, and His250.

The protein belongs to the LovG family.

Its pathway is mycotoxin biosynthesis. Probable esterase; part of the Tox1A locus, one of the 2 loci that mediate the biosynthesis of T-toxin, a family of linear polyketides 37 to 45 carbons in length, of which the major component is 41 carbons, and which leads to high virulence to maize. One of the PKSs (PKS1 or PKS2) could synthesize a precursor, used subsequently by the other PKS as starter unit, to add additional carbons. Variability in the length of the final carbon backbone C35-47 could be achieved by varying the number of condensation cycles, or use of different starter or extender units or might be due to decarboxylation of the penultimate product, catalyzed by DEC1. Additional proteins are required for the biosynthesis of T-toxin, including oxidoreductases RED1, RED2, RED3, LAM1 and OXI1, as well as esterase TOX9. The chain is Probable esterase TOX9 from Cochliobolus heterostrophus (strain C4 / ATCC 48331 / race T) (Southern corn leaf blight fungus).